Consider the following 151-residue polypeptide: C-C motif chemokine 25 (151 aa).

Residues 1–22 form the signal peptide; it reads MNLWLLVCLVASLMGAWSTVHT. Disulfide bonds link Cys-29/Cys-57 and Cys-30/Cys-73. The disordered stretch occupies residues 94-151; the sequence is THSKQHLGSRRNLQDSHLGGQRSNTGMSRLAHSKSKSSRSTRSNKKKTSFLNMANPGP. Positions 124–141 are enriched in basic residues; sequence AHSKSKSSRSTRSNKKKT.

The protein belongs to the intercrine beta (chemokine CC) family.

The protein localises to the secreted. Potentially involved in T-cell development. Recombinant protein shows chemotactic activity on thymocytes, macrophages, THP-1 cells, and dendritics cells but is inactive on peripheral blood lymphocytes and neutrophils. Binds to CCR9. Binds to atypical chemokine receptor ACKR4 and mediates the recruitment of beta-arrestin (ARRB1/2) to ACKR4. In Canis lupus familiaris (Dog), this protein is C-C motif chemokine 25 (CCL25).